Consider the following 373-residue polypeptide: 3-dehydroquinate synthase (373 aa).

NAD(+)-binding positions include 74-79 (DAEAGK), 108-112 (GAATD), 132-133 (TT), Lys-145, Lys-154, and 172-175 (TLET). Zn(2+)-binding residues include Glu-187, His-250, and His-266.

It belongs to the sugar phosphate cyclases superfamily. Dehydroquinate synthase family. Co(2+) serves as cofactor. Requires Zn(2+) as cofactor. It depends on NAD(+) as a cofactor.

Its subcellular location is the cytoplasm. It catalyses the reaction 7-phospho-2-dehydro-3-deoxy-D-arabino-heptonate = 3-dehydroquinate + phosphate. The protein operates within metabolic intermediate biosynthesis; chorismate biosynthesis; chorismate from D-erythrose 4-phosphate and phosphoenolpyruvate: step 2/7. Catalyzes the conversion of 3-deoxy-D-arabino-heptulosonate 7-phosphate (DAHP) to dehydroquinate (DHQ). This Nocardia farcinica (strain IFM 10152) protein is 3-dehydroquinate synthase.